The sequence spans 375 residues: Cobalt-precorrin-5B C(1)-methyltransferase (375 aa).

Belongs to the CbiD family.

The enzyme catalyses Co-precorrin-5B + S-adenosyl-L-methionine = Co-precorrin-6A + S-adenosyl-L-homocysteine. It functions in the pathway cofactor biosynthesis; adenosylcobalamin biosynthesis; cob(II)yrinate a,c-diamide from sirohydrochlorin (anaerobic route): step 6/10. Its function is as follows. Catalyzes the methylation of C-1 in cobalt-precorrin-5B to form cobalt-precorrin-6A. The polypeptide is Cobalt-precorrin-5B C(1)-methyltransferase (Fusobacterium nucleatum subsp. nucleatum (strain ATCC 25586 / DSM 15643 / BCRC 10681 / CIP 101130 / JCM 8532 / KCTC 2640 / LMG 13131 / VPI 4355)).